We begin with the raw amino-acid sequence, 100 residues long: Succinate dehydrogenase assembly factor 4, mitochondrial (100 aa).

A mitochondrion-targeting transit peptide spans 1–31 (MFNRNLRAVILKNYNKALTRCLHDAGNLKRP). A disordered region spans residues 24–100 (DAGNLKRPTP…YSYEGRVTDF (77 aa)). 2 stretches are compositionally biased toward basic and acidic residues: residues 36–68 (LPKEQQEEWDRLQKESSKRPVDVMRREKHKDFE) and 85–100 (PTVHGDYSYEGRVTDF).

This sequence belongs to the SDHAF4 family. As to quaternary structure, interacts with sdh1 in its FAD-bound form.

Its subcellular location is the mitochondrion matrix. Functionally, plays an essential role in the assembly of succinate dehydrogenase (SDH), an enzyme complex (also referred to as respiratory complex II) that is a component of both the tricarboxylic acid (TCA) cycle and the mitochondrial electron transport chain, and which couples the oxidation of succinate to fumarate with the reduction of ubiquinone (coenzyme Q) to ubiquinol. Binds to the flavoprotein subunit sdh1 in its FAD-bound form, blocking the generation of excess reactive oxygen species (ROS) and facilitating its assembly with the iron-sulfur protein subunit sdh2 into the SDH catalytic dimer. This chain is Succinate dehydrogenase assembly factor 4, mitochondrial, found in Schizosaccharomyces pombe (strain 972 / ATCC 24843) (Fission yeast).